Consider the following 77-residue polypeptide: Acyl carrier protein (77 aa).

A Carrier domain is found at 1 to 76 (MADFEKIKSI…DVIKFIDKLK (76 aa)). Ser-36 is modified (O-(pantetheine 4'-phosphoryl)serine).

The protein belongs to the acyl carrier protein (ACP) family. In terms of processing, 4'-phosphopantetheine is transferred from CoA to a specific serine of apo-ACP by AcpS. This modification is essential for activity because fatty acids are bound in thioester linkage to the sulfhydryl of the prosthetic group.

It is found in the cytoplasm. It functions in the pathway lipid metabolism; fatty acid biosynthesis. Its function is as follows. Carrier of the growing fatty acid chain in fatty acid biosynthesis. This Leptospira biflexa serovar Patoc (strain Patoc 1 / Ames) protein is Acyl carrier protein.